Reading from the N-terminus, the 177-residue chain is Large ribosomal subunit protein uL6 (177 aa).

This sequence belongs to the universal ribosomal protein uL6 family. Part of the 50S ribosomal subunit.

In terms of biological role, this protein binds to the 23S rRNA, and is important in its secondary structure. It is located near the subunit interface in the base of the L7/L12 stalk, and near the tRNA binding site of the peptidyltransferase center. The protein is Large ribosomal subunit protein uL6 of Klebsiella pneumoniae subsp. pneumoniae (strain ATCC 700721 / MGH 78578).